Consider the following 763-residue polypeptide: MQKSGVNRNPSLKVAIPQAQQSLRRLGFCSQIATGGSQQSSPIVFPEKRNKKVKASSRRGEVTNDPQVKPKPDEHRIDIGGGDEKSDLLGSLVYAGKLVLDKRKSASGKDATEIQQPAATDISIKKAVDAKLTSSALVWGSDMLQLNDVVSVTYNVGLRHFTVHAYPIGKGSCGLSCFTKPKRSRKDFRFVAPTVEEAVQWVASFGDQQCFINCLPHPLVAKKQASSELFSVPIDTPPELVFRCKSAPKMLVILNPRSGHGRSIKVFHNVVEPIFKLAGIKMEVVKTTKAGHARELASTVDINLCSDGIICVGGDGIINEVLNGLLTRSNPKEGVSIPIGIVPAGSDNSLVWTVLGVRDPISAALSIVKGGLTATDVFAVEWIHTGIIHFGMTVSYYGFVSDVLELSEKYQKRFGPLRYFVAGFLKFMCLPKYSYEVEYLPAQKEDAEGKIRLEKEAVDMQDLYTDVMRRSSREGFPRASSLSSIDSIMTPSVGELDTCSSTHASTEPSEYVRGIDPKMKRLSSGRRDVTAEPEVIHPQAQSTTPNWPRTRSKSRMDKGWMGLTSVQDPPTRCSWGNTGGQDREDISSTVSDPGPIWDAGPKWDTEPSAWDVENSIELPGPPEDIETGLRKQSITPIFEDKWVSRKGHFLGIMVCNHACRTVQSSQVVAPNSEHDDGTMDMLLVHGCGRLRLLRFFILLQTGRHLSLPYVECVKVKSVKIKAGKNTHDSCGIDGELFALHGEVISTMLPEQCRLIGNAPGRHS.

The interval 34-81 (TGGSQQSSPIVFPEKRNKKVKASSRRGEVTNDPQVKPKPDEHRIDIGG) is disordered. The segment covering 58 to 81 (RRGEVTNDPQVKPKPDEHRIDIGG) has biased composition (basic and acidic residues). The region spanning 245 to 384 (KSAPKMLVIL…TDVFAVEWIH (140 aa)) is the DAGKc domain. ATP contacts are provided by residues 255 to 257 (NPR) and T287. 313 to 316 (GGDG) contacts substrate. The Proton donor/acceptor role is filled by D315. ATP-binding positions include E320, 345-347 (GSD), and R418. The interval 561 to 603 (MGLTSVQDPPTRCSWGNTGGQDREDISSTVSDPGPIWDAGPKW) is disordered. 733–735 (DGE) lines the ATP pocket.

Expressed in roots, stems, leaves and at higher levels in flowers.

Functionally, involved in the production of sphingolipid metabolites. Active on sphingosine, phytosphingosine (PHS, 4-hydroxysphinganine), D-erythro-dihydrosphingosine, D-erythro-sphingosine and trans-4, trans-8-sphingadienine, an LCB found exclusively in plants, but not on N-acetyl-dihydrosphingosine (C2-dihydroceramide) and D-threo-dihydrosphingosine. In Arabidopsis thaliana (Mouse-ear cress), this protein is Sphingoid long-chain bases kinase 1 (LCBK1).